A 3993-amino-acid polypeptide reads, in one-letter code: Intermembrane lipid transfer protein VPS13B (3993 aa).

The Chorein N-terminal domain maps to 2–102 (LESYVTPILM…KDGIQDDHES (101 aa)). The segment at 100-133 (HESCGSNSTNRSTAENTKSSIKPRRIQQAAPADP) is disordered. Residues 103–119 (CGSNSTNRSTAENTKSS) show a composition bias toward polar residues. Serine 413, serine 998, serine 1001, and serine 1032 each carry phosphoserine. Disordered stretches follow at residues 1262–1303 (SPVW…PFSD), 1616–1637 (DQLK…ERNS), and 1735–1770 (TKAT…DSGI). Residues 1264 to 1291 (VWSSVGTAPPDTSTCSPSADIGTTTEGD) show a composition bias toward polar residues. A compositionally biased stretch (basic and acidic residues) spans 1739 to 1750 (EISKQEQKKVDT). A compositionally biased stretch (polar residues) spans 1756–1770 (AETSSRYSGAQDSGI). Serine 1789 is modified (phosphoserine). Residues 2048-2067 (HSSAHSKETSTPSDSILNMD) form a disordered region. The 80-residue stretch at 2604-2683 (HFVICNDTQE…TIQYKGRTAS (80 aa)) folds into the SHR-BD domain. The tract at residues 3880–3993 (AFPITEISCA…KNKALRKGFS (114 aa)) is localizes the protein to the Golgi apparatus.

This sequence belongs to the VPS13 family. In terms of assembly, interacts with STX6. Interacts with STX12 (via N-terminus). Interacts with RAB6A isoform 1 (GTP-bound) and isoform 2 (GTP-bound). Interacts with RAB6B (GTP-bound). As to expression, ubiquitously expressed in all examined tissues.

The protein resides in the recycling endosome membrane. The protein localises to the cytoplasmic vesicle. Its subcellular location is the secretory vesicle. It localises to the acrosome membrane. It is found in the golgi apparatus. The protein resides in the cis-Golgi network membrane. The protein localises to the endoplasmic reticulum-Golgi intermediate compartment membrane. Its subcellular location is the trans-Golgi network membrane. It localises to the early endosome membrane. It is found in the lysosome membrane. Its function is as follows. Mediates the transfer of lipids between membranes at organelle contact sites. Binds phosphatidylinositol 3-phosphate. Functions as a tethering factor in the slow endocytic recycling pathway, to assist traffic between early and recycling endosomes. Involved in the transport of proacrosomal vesicles to the nuclear dense lamina (NDL) during spermatid development. Plays a role in the assembly of the Golgi apparatus, possibly by mediating trafficking to the Golgi membrane. Plays a role in the development of the nervous system, and may be required for neuron projection development. May also play a role during adipose tissue development. Required for maintenance of the ocular lens. Required for proper organization of the Golgi. This chain is Intermembrane lipid transfer protein VPS13B, found in Mus musculus (Mouse).